The chain runs to 163 residues: Cytosolic iron-sulfur assembly component 2B (163 aa).

The protein belongs to the MIP18 family. In terms of assembly, component of the CIA complex. Component of the MMXD complex, which includes CIAO1, ERCC2, CIAO2B, MMS19 and SLC25A5. Interacts with CIAO1, ERCC2 and MMS19; the interactions are direct. Interacts with KIF4A; the interaction facilitates the transfer of Fe-S clusters to KIF4A to ensure proper localization of KIF4A to the mitotic machinery. Interacts with CCDC117; the interaction is direct.

Its subcellular location is the nucleus. The protein resides in the cytoplasm. It localises to the cytoskeleton. It is found in the spindle. Its function is as follows. Component of the cytosolic iron-sulfur protein assembly (CIA) complex, a multiprotein complex that mediates the incorporation of iron-sulfur cluster into extramitochondrial Fe/S proteins. As a CIA complex component and in collaboration with CIAO1 and MMS19, binds to and facilitates the assembly of most cytosolic-nuclear Fe/S proteins. As part of the mitotic spindle-associated MMXD complex it plays a role in chromosome segregation, probably by facilitating iron-sulfur cluster assembly into ERCC2/XPD. Together with MMS19, facilitates the transfer of Fe-S clusters to the motor protein KIF4A, which ensures proper localization of KIF4A to mitotic machinery components to promote the progression of mitosis. This Mus musculus (Mouse) protein is Cytosolic iron-sulfur assembly component 2B.